Consider the following 598-residue polypeptide: MTKIRNFSIIAHIDHGKSTLADRLIQRAGLVTDRQFRDQILDNMDIERERGITIKSQTVTLPYRSRNGEEVELNLIDTPGHVDFSYEVSRALASCEGVLLLVDASQGVQAQTLANLYAAMEHDLTIIPVINKIDLLSADIENTRAQIESELGLDSSQAVLCSAKEGRGIDDVLEAVVDRIPPPSGKLDAPLSALIFDAHYDSFRGTIVACRVFDGSVRPGDVIRFMSNGATYKVEEVGVFRLSREPKKELRAGMVGYVISGVKTVSDTRVGDTITLDSNPVPAPLPGFKEVKPVVFSSIYPISSDDYLSLADSLEKYKLNDAALIYQKDSSVALGQGFRCGFLGLLHLEIVQERLEREYDQSIIMTFPSVQYVLTLEDGSTTMVDNPQYYPDPIRIRTSAEPFIKASIIIPERYMGAVMKLCLDKRGVNPRFNYPTPGRIEISMEMPLAEVVFDFYDKLKTVTQGYGSFDYDLIEHRVSDLVKLDILVNSEKVDALSLIVHRERAREWAVQVCDRLKEEIPRHQFKIAIQGAIGGKIIARSTVNAFRKDVTAKCYGGDISRKRKLLEKQKKGKKRMKMVGSVMIPQSAFVAVLKADNE.

A tr-type G domain is found at 2 to 184 (TKIRNFSIIA…AVVDRIPPPS (183 aa)). GTP contacts are provided by residues 14 to 19 (DHGKST) and 131 to 134 (NKID).

The protein belongs to the TRAFAC class translation factor GTPase superfamily. Classic translation factor GTPase family. LepA subfamily.

It is found in the cell inner membrane. The catalysed reaction is GTP + H2O = GDP + phosphate + H(+). Functionally, required for accurate and efficient protein synthesis under certain stress conditions. May act as a fidelity factor of the translation reaction, by catalyzing a one-codon backward translocation of tRNAs on improperly translocated ribosomes. Back-translocation proceeds from a post-translocation (POST) complex to a pre-translocation (PRE) complex, thus giving elongation factor G a second chance to translocate the tRNAs correctly. Binds to ribosomes in a GTP-dependent manner. This chain is Elongation factor 4, found in Syntrophobacter fumaroxidans (strain DSM 10017 / MPOB).